Here is a 508-residue protein sequence, read N- to C-terminus: Aromatase (508 aa).

Cysteine 437 contacts heme.

Belongs to the cytochrome P450 family. The cofactor is heme.

It is found in the membrane. The enzyme catalyses testosterone + 3 reduced [NADPH--hemoprotein reductase] + 3 O2 = 17beta-estradiol + formate + 3 oxidized [NADPH--hemoprotein reductase] + 4 H2O + 4 H(+). The catalysed reaction is androst-4-ene-3,17-dione + 3 reduced [NADPH--hemoprotein reductase] + 3 O2 = estrone + formate + 3 oxidized [NADPH--hemoprotein reductase] + 4 H2O + 4 H(+). In terms of biological role, catalyzes the formation of aromatic C18 estrogens from C19 androgens. This is Aromatase (Cyp19a1) from Rattus norvegicus (Rat).